Consider the following 308-residue polypeptide: uncharacterized protein (308 aa).

The ABC transporter domain maps to 6-234 (LHIEGLDKKI…TEKAIIEVQP (229 aa)). Position 38–45 (38–45 (GPNGSGKT)) interacts with ATP.

This sequence belongs to the ABC transporter superfamily.

This is an uncharacterized protein from Bacillus subtilis (strain 168).